The primary structure comprises 35 residues: Photosystem II reaction center protein Y (35 aa).

The Lumenal segment spans residues 1–4; sequence MDTR. A helical transmembrane segment spans residues 5–23; it reads LLIVLLPIIAAASWAIYNI. Over 24–35 the chain is Stromal; sequence GKILLLQLTKRS.

This sequence belongs to the PsbY family. As to quaternary structure, PSII is composed of 1 copy each of membrane proteins PsbA, PsbB, PsbC, PsbD, PsbE, PsbF, PsbH, PsbI, PsbJ, PsbK, PsbL, PsbM, PsbT, PsbX, PsbY, PsbZ, Psb30/Ycf12, at least 3 peripheral proteins of the oxygen-evolving complex and a large number of cofactors. It forms dimeric complexes.

The protein localises to the plastid. It localises to the chloroplast thylakoid membrane. Its function is as follows. Loosely associated component of the core of photosystem II (PSII), it is not always seen in crystals. PSII is a light-driven water plastoquinone oxidoreductase, using light energy to abstract electrons from H(2)O, generating a proton gradient subsequently used for ATP formation. The chain is Photosystem II reaction center protein Y from Cyanidioschyzon merolae (strain NIES-3377 / 10D) (Unicellular red alga).